We begin with the raw amino-acid sequence, 234 residues long: Adenosine 5'-phosphosulfate reductase (234 aa).

Residues Cys120, Cys121, Cys203, and Cys206 each contribute to the [4Fe-4S] cluster site. Cys229 serves as the catalytic Nucleophile; cysteine thiosulfonate intermediate.

Belongs to the PAPS reductase family. CysH subfamily. [4Fe-4S] cluster serves as cofactor.

The protein localises to the cytoplasm. It carries out the reaction [thioredoxin]-disulfide + sulfite + AMP + 2 H(+) = adenosine 5'-phosphosulfate + [thioredoxin]-dithiol. It functions in the pathway sulfur metabolism; hydrogen sulfide biosynthesis; sulfite from sulfate. Functionally, catalyzes the formation of sulfite from adenosine 5'-phosphosulfate (APS) using thioredoxin as an electron donor. This Bacillus cereus (strain Q1) protein is Adenosine 5'-phosphosulfate reductase.